We begin with the raw amino-acid sequence, 183 residues long: Ribulose bisphosphate carboxylase small subunit, chloroplastic 4 (183 aa).

A chloroplast-targeting transit peptide spans 1–57 (MASSLMSNAATTMAAATTTAQANMVAPFNGLKSISAFPVTRKNNDITSVASNGGRVQ).

This sequence belongs to the RuBisCO small chain family. As to quaternary structure, heterohexadecamer of 8 large and 8 small subunits.

It localises to the plastid. The protein localises to the chloroplast. In terms of biological role, ruBisCO catalyzes two reactions: the carboxylation of D-ribulose 1,5-bisphosphate, the primary event in carbon dioxide fixation, as well as the oxidative fragmentation of the pentose substrate. Both reactions occur simultaneously and in competition at the same active site. Although the small subunit is not catalytic it is essential for maximal activity. The protein is Ribulose bisphosphate carboxylase small subunit, chloroplastic 4 of Mesembryanthemum crystallinum (Common ice plant).